Consider the following 146-residue polypeptide: Large ribosomal subunit protein uL15y (146 aa).

Basic residues-rich tracts occupy residues Met-1–His-14 and Arg-21–Gly-30. The segment at Met-1 to Met-38 is disordered.

Belongs to the universal ribosomal protein uL15 family.

The chain is Large ribosomal subunit protein uL15y (RPL27AB) from Arabidopsis thaliana (Mouse-ear cress).